A 611-amino-acid chain; its full sequence is Protein Spindly-A (611 aa).

A coiled-coil region spans residues 1–390 (MEESETVLKL…KENEKIKDEL (390 aa)). Residues 487 to 611 (TCTAESTDGR…PNATTQCPQQ (125 aa)) are disordered. Residues 493–511 (TDGRIHSKEDLSLSTKEQD) are compositionally biased toward basic and acidic residues. Residues 552 to 567 (HNCSVTSASPRSTSED) show a composition bias toward polar residues. The segment covering 570–583 (SESKRFDEEQEKRK) has biased composition (basic and acidic residues). The segment covering 602 to 611 (PNATTQCPQQ) has biased composition (polar residues).

This sequence belongs to the Spindly family.

The protein localises to the chromosome. It localises to the centromere. Its subcellular location is the kinetochore. Its function is as follows. Required for the localization of dynein and dynactin to the mitotic kintochore. Dynein is believed to control the initial lateral interaction between the kinetochore and spindle microtubules and to facilitate the subsequent formation of end-on kinetochore-microtubule attachments mediated by the NDC80 complex. The protein is Protein Spindly-A (spdl1-a) of Xenopus laevis (African clawed frog).